The chain runs to 64 residues: MLNLEAIIETGEQVIQKISFNLQHISSVLNTEVFDPFDYCYYRGGNFWEIESAEDCSGDDEFIE.

In Avian infectious bronchitis virus (strain M41) (IBV), this protein is Non-structural protein 3b.